The following is a 316-amino-acid chain: Acetyl-coenzyme A carboxylase carboxyl transferase subunit alpha (316 aa).

The CoA carboxyltransferase C-terminal domain maps to 39–293; that stretch reads RLQDKSHALT…RQTLLAQLES (255 aa).

This sequence belongs to the AccA family. In terms of assembly, acetyl-CoA carboxylase is a heterohexamer composed of biotin carboxyl carrier protein (AccB), biotin carboxylase (AccC) and two subunits each of ACCase subunit alpha (AccA) and ACCase subunit beta (AccD).

The protein localises to the cytoplasm. The enzyme catalyses N(6)-carboxybiotinyl-L-lysyl-[protein] + acetyl-CoA = N(6)-biotinyl-L-lysyl-[protein] + malonyl-CoA. The protein operates within lipid metabolism; malonyl-CoA biosynthesis; malonyl-CoA from acetyl-CoA: step 1/1. Functionally, component of the acetyl coenzyme A carboxylase (ACC) complex. First, biotin carboxylase catalyzes the carboxylation of biotin on its carrier protein (BCCP) and then the CO(2) group is transferred by the carboxyltransferase to acetyl-CoA to form malonyl-CoA. This is Acetyl-coenzyme A carboxylase carboxyl transferase subunit alpha from Azotobacter vinelandii (strain DJ / ATCC BAA-1303).